The primary structure comprises 101 residues: MANVTVTFTITEFCLHTGISEEELNEIVGLGVVEPSEIQETTWVFDDHAAIVVQRAVRLRHELALDWPGIAVALTLMDDIAHLKQENRLLRQRLSRFVAHP.

The protein belongs to the CbpM family.

Functionally, interacts with CbpA and inhibits both the DnaJ-like co-chaperone activity and the DNA binding activity of CbpA. Together with CbpA, modulates the activity of the DnaK chaperone system. Does not inhibit the co-chaperone activity of DnaJ. The protein is Chaperone modulatory protein CbpM of Escherichia coli O1:K1 / APEC.